Reading from the N-terminus, the 158-residue chain is DNA-binding transcriptional repressor RacR (158 aa).

In terms of assembly, homooctamer.

Its function is as follows. Transcriptional regulator that represses the expression of ydaS and ydaT under normal physiological conditions. It binds to its own upstream sequence and represses the adjacent and divergently coded ydaS-ydaT operon. RacR-mediated down-regulation of ydaS and ydaT may be critical for cell survival. RacR ensures that the prophage DNA is maintained in the genome. When the expression of the racR gene is reduced, the prophage Rac is excised from the genome, possibly to counteract the lethal toxicity of YdaT. In Escherichia coli (strain K12), this protein is DNA-binding transcriptional repressor RacR (racR).